The following is a 303-amino-acid chain: Inner kinetochore subunit mal2 (303 aa).

It belongs to the CENP-O/MCM21 family. As to quaternary structure, component of the heterotetrameric kinetochore subcomplex COMA, which consists of fta2, fta7, mal2 and mis17. The COMA subcomplex is part of a larger constitutive centromere-associated network (CCAN) (also known as central kinetochore Sim4 complex in fission yeast), which is composed of at least cnl2, cnp3, cnp20, fta1, fta2, fta3, fta4, fta6, fta7, mal2, mhf1, mhf2, mis6, mis15, mis17, sim4 and wip1.

Its subcellular location is the nucleus. It localises to the chromosome. The protein localises to the centromere. It is found in the kinetochore. Functionally, component of the kinetochore, a multiprotein complex that assembles on centromeric DNA and attaches chromosomes to spindle microtubules, mediating chromosome segregation and sister chromatid segregation during meiosis and mitosis. Component of the inner kinetochore COMA complex, which connects centromere-associated proteins and the outer kinetochore. COMA interacts with other inner kinetochore proteins to form the inner kinetochore constitutive centromere-associated network (CCAN), which serves as a structural platform for outer kinetochore assembly. The polypeptide is Inner kinetochore subunit mal2 (mal2) (Schizosaccharomyces pombe (strain 972 / ATCC 24843) (Fission yeast)).